Here is a 340-residue protein sequence, read N- to C-terminus: DNA-directed RNA polymerase subunit alpha (340 aa).

The alpha N-terminal domain (alpha-NTD) stretch occupies residues M1–E236. An alpha C-terminal domain (alpha-CTD) region spans residues T246 to N340.

It belongs to the RNA polymerase alpha chain family. Homodimer. The RNAP catalytic core consists of 2 alpha, 1 beta, 1 beta' and 1 omega subunit. When a sigma factor is associated with the core the holoenzyme is formed, which can initiate transcription.

The catalysed reaction is RNA(n) + a ribonucleoside 5'-triphosphate = RNA(n+1) + diphosphate. Functionally, DNA-dependent RNA polymerase catalyzes the transcription of DNA into RNA using the four ribonucleoside triphosphates as substrates. This Rickettsia felis (strain ATCC VR-1525 / URRWXCal2) (Rickettsia azadi) protein is DNA-directed RNA polymerase subunit alpha.